We begin with the raw amino-acid sequence, 183 residues long: TATA-box-binding protein 2 (183 aa).

Tandem repeats lie at residues isoleucine 8–leucine 84 and valine 99–leucine 177.

It belongs to the TBP family.

General factor that plays a role in the activation of archaeal genes transcribed by RNA polymerase. Binds specifically to the TATA box promoter element which lies close to the position of transcription initiation. This is TATA-box-binding protein 2 from Methanosarcina mazei (strain ATCC BAA-159 / DSM 3647 / Goe1 / Go1 / JCM 11833 / OCM 88) (Methanosarcina frisia).